A 308-amino-acid chain; its full sequence is Aspartate carbamoyltransferase catalytic subunit (308 aa).

Carbamoyl phosphate is bound by residues Arg-49 and Thr-50. Lys-77 is an L-aspartate binding site. The carbamoyl phosphate site is built by Arg-99, His-127, and Gln-130. 2 residues coordinate L-aspartate: Arg-160 and Arg-211. 2 residues coordinate carbamoyl phosphate: Ala-252 and Pro-253.

It belongs to the aspartate/ornithine carbamoyltransferase superfamily. ATCase family. Heterododecamer (2C3:3R2) of six catalytic PyrB chains organized as two trimers (C3), and six regulatory PyrI chains organized as three dimers (R2).

It carries out the reaction carbamoyl phosphate + L-aspartate = N-carbamoyl-L-aspartate + phosphate + H(+). The protein operates within pyrimidine metabolism; UMP biosynthesis via de novo pathway; (S)-dihydroorotate from bicarbonate: step 2/3. Functionally, catalyzes the condensation of carbamoyl phosphate and aspartate to form carbamoyl aspartate and inorganic phosphate, the committed step in the de novo pyrimidine nucleotide biosynthesis pathway. This chain is Aspartate carbamoyltransferase catalytic subunit, found in Geobacillus kaustophilus (strain HTA426).